The following is a 256-amino-acid chain: Pimeloyl-[acyl-carrier protein] methyl ester esterase (256 aa).

Residues 15 to 242 (HLVLLHGWGL…AAHAPFISHP (228 aa)) enclose the AB hydrolase-1 domain. Residues tryptophan 22, 82–83 (SL), and 143–147 (FLALQ) contribute to the substrate site. Catalysis depends on serine 82, which acts as the Nucleophile. Catalysis depends on residues aspartate 207 and histidine 235. A substrate-binding site is contributed by histidine 235.

Belongs to the AB hydrolase superfamily. Carboxylesterase BioH family. In terms of assembly, monomer.

The protein resides in the cytoplasm. It catalyses the reaction 6-carboxyhexanoyl-[ACP] methyl ester + H2O = 6-carboxyhexanoyl-[ACP] + methanol + H(+). The protein operates within cofactor biosynthesis; biotin biosynthesis. In terms of biological role, the physiological role of BioH is to remove the methyl group introduced by BioC when the pimeloyl moiety is complete. It allows to synthesize pimeloyl-ACP via the fatty acid synthetic pathway through the hydrolysis of the ester bonds of pimeloyl-ACP esters. This is Pimeloyl-[acyl-carrier protein] methyl ester esterase from Escherichia coli O139:H28 (strain E24377A / ETEC).